Consider the following 382-residue polypeptide: 1-deoxy-D-xylulose 5-phosphate reductoisomerase (382 aa).

The NADPH site is built by Thr-10, Gly-11, Ser-12, Ile-13, Gly-36, and Asn-122. Residue Lys-123 participates in 1-deoxy-D-xylulose 5-phosphate binding. Position 124 (Glu-124) interacts with NADPH. Asp-148 is a Mn(2+) binding site. 1-deoxy-D-xylulose 5-phosphate is bound by residues Ser-149, Glu-150, Ser-174, and His-197. Glu-150 is a binding site for Mn(2+). Gly-203 provides a ligand contact to NADPH. 1-deoxy-D-xylulose 5-phosphate is bound by residues Ser-210, Asn-215, Lys-216, and Glu-219. Glu-219 lines the Mn(2+) pocket.

This sequence belongs to the DXR family. Requires Mg(2+) as cofactor. Mn(2+) is required as a cofactor.

The catalysed reaction is 2-C-methyl-D-erythritol 4-phosphate + NADP(+) = 1-deoxy-D-xylulose 5-phosphate + NADPH + H(+). It functions in the pathway isoprenoid biosynthesis; isopentenyl diphosphate biosynthesis via DXP pathway; isopentenyl diphosphate from 1-deoxy-D-xylulose 5-phosphate: step 1/6. Functionally, catalyzes the NADPH-dependent rearrangement and reduction of 1-deoxy-D-xylulose-5-phosphate (DXP) to 2-C-methyl-D-erythritol 4-phosphate (MEP). In Chlorobaculum tepidum (strain ATCC 49652 / DSM 12025 / NBRC 103806 / TLS) (Chlorobium tepidum), this protein is 1-deoxy-D-xylulose 5-phosphate reductoisomerase.